The primary structure comprises 168 residues: Thermonuclease (168 aa).

The signal sequence occupies residues 1–27; it reads MKKITTGVLILAIAIVVLIFQYINGDG. Active-site residues include R64, E72, and R114.

Belongs to the thermonuclease family. Ca(2+) serves as cofactor.

It localises to the secreted. It catalyses the reaction Endonucleolytic cleavage to nucleoside 3'-phosphates and 3'-phosphooligonucleotide end-products.. In terms of biological role, enzyme that catalyzes the hydrolysis of both DNA and RNA at the 5'-position of the phosphodiester bond. The protein is Thermonuclease (nucI) of Staphylococcus intermedius.